Consider the following 67-residue polypeptide: Light-harvesting protein B-870 alpha chain (67 aa).

Met1 carries the post-translational modification N-formylmethionine; in strain DSM 149 and DSM 151. Residues 1–12 (MWRIWRLFDPMR) lie on the Cytoplasmic side of the membrane. The helical transmembrane segment at 13-33 (AMVAQAVFLLGLAVLIHLMLL) threads the bilayer. An a bacteriochlorophyll-binding site is contributed by His29. The Periplasmic segment spans residues 34–67 (GTNKYNWLDGAKKAPAATAVAPVPAEVTSLAQAK).

The protein belongs to the antenna complex alpha subunit family. As to quaternary structure, an alpha/beta heterodimer. The core complex is formed by different alpha and beta chains, binding bacteriochlorophyll molecules, and arranged most probably in tetrameric structures disposed around the reaction center. The non-pigmented gamma chains may constitute additional components. Post-translationally, the N-terminus is blocked.

The protein resides in the cell inner membrane. Antenna complexes are light-harvesting systems, which transfer the excitation energy to the reaction centers. The polypeptide is Light-harvesting protein B-870 alpha chain (pufA) (Rubrivivax gelatinosus (Rhodocyclus gelatinosus)).